The sequence spans 400 residues: MAIKLEVKNLYKIFGEHPQRAFKYIEKGLSKEQILEKTGLSLGVKDASLAIEEGEIFVIMGLSGSGKSTMVRLLNRLIEPTRGQVLIDGVDIAKISDAELREVRRKKIAMVFQSFALMPHMTVLDNTAFGMELAGIAAQERREKALDALRQVGLENYAHAYPDELSGGMRQRVGLARALAINPDILLMDEAFSALDPLIRTEMQDELVKLQAKHQRTIVFISHDLDEAMRIGDRIAIMQNGEVVQVGTPDEILNNPANDYVRTFFRGVDISQVFSAKDIARRSPVGLIRKTPGFGPRSALKLLQDEDREYGYVIERGNKFVGVVSIDSLKAALSQAQGIEAALIDDPLVVDAQTPLSELLSHVGQAPCAVPVVDEEHQYVGIISKRMLLQALDREGGNNG.

The ABC transporter domain occupies 29 to 265 (LSKEQILEKT…PANDYVRTFF (237 aa)). 61-68 (GLSGSGKS) is an ATP binding site. CBS domains lie at 280 to 341 (ARRS…GIEA) and 343 to 400 (LIDD…GNNG).

The protein belongs to the ABC transporter superfamily. As to quaternary structure, the complex is composed of two ATP-binding proteins (ProV), two transmembrane proteins (ProW) and a solute-binding protein (ProX).

The protein resides in the cell inner membrane. Part of the ProU ABC transporter complex involved in glycine betaine and proline betaine uptake. Probably responsible for energy coupling to the transport system. The sequence is that of Glycine betaine/proline betaine transport system ATP-binding protein ProV from Salmonella typhimurium (strain LT2 / SGSC1412 / ATCC 700720).